Reading from the N-terminus, the 183-residue chain is METYMDTLNQLSTICFGHGDGFGINTNILETNIINLSVVIGVVVSFGGDALRSLLDNRKETILANLQEADLRAKEAQEKLAAARLQLEQAQTKAQEIRQQGTITAEQEKQLCIKQAEADMARLEDVKQQTLRLQQQRAMSQVSQQVIALALQKVRQKLQDAANSAFHTSVNNSNIAFFTKYKV.

The helical transmembrane segment at 33 to 51 (IINLSVVIGVVVSFGGDAL) threads the bilayer.

Belongs to the ATPase B chain family. In terms of assembly, F-type ATPases have 2 components, F(1) - the catalytic core - and F(0) - the membrane proton channel. F(1) has five subunits: alpha(3), beta(3), gamma(1), delta(1), epsilon(1). F(0) has four main subunits: a(1), b(1), b'(1) and c(10-14). The alpha and beta chains form an alternating ring which encloses part of the gamma chain. F(1) is attached to F(0) by a central stalk formed by the gamma and epsilon chains, while a peripheral stalk is formed by the delta, b and b' chains.

Its subcellular location is the plastid. It is found in the chloroplast thylakoid membrane. In terms of biological role, f(1)F(0) ATP synthase produces ATP from ADP in the presence of a proton or sodium gradient. F-type ATPases consist of two structural domains, F(1) containing the extramembraneous catalytic core and F(0) containing the membrane proton channel, linked together by a central stalk and a peripheral stalk. During catalysis, ATP synthesis in the catalytic domain of F(1) is coupled via a rotary mechanism of the central stalk subunits to proton translocation. Component of the F(0) channel, it forms part of the peripheral stalk, linking F(1) to F(0). This Oltmannsiellopsis viridis (Marine flagellate) protein is ATP synthase subunit b, chloroplastic.